The following is a 210-amino-acid chain: Thymidylate kinase (210 aa).

Residue 11–18 (GLEGAGKS) coordinates ATP.

The protein belongs to the thymidylate kinase family.

It carries out the reaction dTMP + ATP = dTDP + ADP. Functionally, phosphorylation of dTMP to form dTDP in both de novo and salvage pathways of dTTP synthesis. The sequence is that of Thymidylate kinase from Histophilus somni (strain 2336) (Haemophilus somnus).